A 334-amino-acid polypeptide reads, in one-letter code: Putative B3 domain-containing protein At3g49610 (334 aa).

Disordered stretches follow at residues 69 to 89 (ERRT…GSEK) and 133 to 178 (DEFE…KFDP). 2 stretches are compositionally biased toward polar residues: residues 73 to 84 (LGSSPTKTNTLF) and 141 to 157 (KSPT…SCLM). Over residues 161-173 (KRKRYQSSGKSKK) the composition is skewed to basic residues. The segment at residues 229-334 (FNKLLRNDFL…GVLCFALEKE (106 aa)) is a DNA-binding region (TF-B3).

The protein localises to the nucleus. The polypeptide is Putative B3 domain-containing protein At3g49610 (Arabidopsis thaliana (Mouse-ear cress)).